Consider the following 232-residue polypeptide: Putative quercetin 2,3-dioxygenase PA1210 (232 aa).

A divalent metal cation-binding residues include His57, His59, His101, and Glu103.

It belongs to the pirin family. A divalent metal cation is required as a cofactor.

The catalysed reaction is quercetin + O2 = 2-(3,4-dihydroxybenzoyloxy)-4,6-dihydroxybenzoate + CO. The protein operates within flavonoid metabolism; quercetin degradation. In terms of biological role, putative quercetin 2,3-dioxygenase. The chain is Putative quercetin 2,3-dioxygenase PA1210 from Pseudomonas aeruginosa (strain ATCC 15692 / DSM 22644 / CIP 104116 / JCM 14847 / LMG 12228 / 1C / PRS 101 / PAO1).